Reading from the N-terminus, the 327-residue chain is Ferrochelatase (327 aa).

Positions 196 and 277 each coordinate Fe cation.

It belongs to the ferrochelatase family.

The protein resides in the cytoplasm. The enzyme catalyses heme b + 2 H(+) = protoporphyrin IX + Fe(2+). It participates in porphyrin-containing compound metabolism; protoheme biosynthesis; protoheme from protoporphyrin-IX: step 1/1. In terms of biological role, catalyzes the ferrous insertion into protoporphyrin IX. This Gloeobacter violaceus (strain ATCC 29082 / PCC 7421) protein is Ferrochelatase.